Here is a 212-residue protein sequence, read N- to C-terminus: GTP cyclohydrolase 1 (212 aa).

Positions 103, 106, and 174 each coordinate Zn(2+).

Belongs to the GTP cyclohydrolase I family. Toroid-shaped homodecamer, composed of two pentamers of five dimers.

The enzyme catalyses GTP + H2O = 7,8-dihydroneopterin 3'-triphosphate + formate + H(+). It participates in cofactor biosynthesis; 7,8-dihydroneopterin triphosphate biosynthesis; 7,8-dihydroneopterin triphosphate from GTP: step 1/1. This Caulobacter vibrioides (strain ATCC 19089 / CIP 103742 / CB 15) (Caulobacter crescentus) protein is GTP cyclohydrolase 1.